The following is a 1416-amino-acid chain: DNA-directed RNA polymerase subunit beta' (1416 aa).

Positions 60, 62, 75, and 78 each coordinate Zn(2+). Positions 449, 451, and 453 each coordinate Mg(2+). Zn(2+) is bound by residues C781, C855, C862, and C865.

It belongs to the RNA polymerase beta' chain family. As to quaternary structure, the RNAP catalytic core consists of 2 alpha, 1 beta, 1 beta' and 1 omega subunit. When a sigma factor is associated with the core the holoenzyme is formed, which can initiate transcription. Requires Mg(2+) as cofactor. It depends on Zn(2+) as a cofactor.

The catalysed reaction is RNA(n) + a ribonucleoside 5'-triphosphate = RNA(n+1) + diphosphate. In terms of biological role, DNA-dependent RNA polymerase catalyzes the transcription of DNA into RNA using the four ribonucleoside triphosphates as substrates. The protein is DNA-directed RNA polymerase subunit beta' of Treponema pallidum (strain Nichols).